Here is a 69-residue protein sequence, read N- to C-terminus: Trypsin/subtilisin inhibitor (69 aa).

An intrachain disulfide couples Cys4 to Cys49.

It belongs to the protease inhibitor I13 (potato type I serine protease inhibitor) family.

Functionally, inhibitor of trypsin, chymotrypsin, subtilisin, etc. In Amaranthus caudatus (Love-lies-bleeding), this protein is Trypsin/subtilisin inhibitor.